The sequence spans 275 residues: Phosphonoacetaldehyde hydrolase (275 aa).

The Nucleophile role is filled by aspartate 15. Residues aspartate 15 and alanine 17 each coordinate Mg(2+). Lysine 56 serves as the catalytic Schiff-base intermediate with substrate. Residue aspartate 189 participates in Mg(2+) binding.

It belongs to the HAD-like hydrolase superfamily. PhnX family. In terms of assembly, homodimer. Requires Mg(2+) as cofactor.

The catalysed reaction is phosphonoacetaldehyde + H2O = acetaldehyde + phosphate + H(+). Involved in phosphonate degradation. The protein is Phosphonoacetaldehyde hydrolase of Pseudomonas putida (strain ATCC 700007 / DSM 6899 / JCM 31910 / BCRC 17059 / LMG 24140 / F1).